Consider the following 152-residue polypeptide: Outer membrane protein assembly factor BamE (152 aa).

The first 32 residues, 1 to 32 (MIDQNHDSEEQAQMQKLTRTVTLTVALTLVSG), serve as a signal peptide directing secretion. Cys33 carries the N-palmitoyl cysteine lipid modification. Residue Cys33 is the site of S-diacylglycerol cysteine attachment. Positions 114–152 (IDRHGDFSRPPSVADERGIGPTDSTNARGNLLNARPDDE) are disordered.

This sequence belongs to the BamE family. Part of the Bam complex.

It localises to the cell outer membrane. Part of the outer membrane protein assembly complex, which is involved in assembly and insertion of beta-barrel proteins into the outer membrane. The chain is Outer membrane protein assembly factor BamE from Halomonas elongata (strain ATCC 33173 / DSM 2581 / NBRC 15536 / NCIMB 2198 / 1H9).